A 309-amino-acid chain; its full sequence is Probable RuBisCO transcriptional regulator (309 aa).

Residues 5 to 62 (FTLQQLRILKAIATEKSFTRAAEVLFVSQPSLSKQIKTLESRLNISLLNRENNIVSLT) form the HTH lysR-type domain. Positions 22 to 41 (FTRAAEVLFVSQPSLSKQIK) form a DNA-binding region, H-T-H motif.

It belongs to the LysR transcriptional regulatory family.

It is found in the plastid. The protein resides in the chloroplast. Functionally, trans-acting transcriptional regulator of RuBisCO genes (rbcL and rbcS) expression. In Trieres chinensis (Marine centric diatom), this protein is Probable RuBisCO transcriptional regulator (rbcR).